We begin with the raw amino-acid sequence, 67 residues long: Large ribosomal subunit protein uL29 (67 aa).

The protein belongs to the universal ribosomal protein uL29 family.

This is Large ribosomal subunit protein uL29 from Methanothrix thermoacetophila (strain DSM 6194 / JCM 14653 / NBRC 101360 / PT) (Methanosaeta thermophila).